Here is a 518-residue protein sequence, read N- to C-terminus: Bifunctional purine biosynthesis protein PurH (518 aa).

The MGS-like domain occupies 1–146; that stretch reads MARIALISVS…KNHESVSILT (146 aa).

It belongs to the PurH family.

It carries out the reaction (6R)-10-formyltetrahydrofolate + 5-amino-1-(5-phospho-beta-D-ribosyl)imidazole-4-carboxamide = 5-formamido-1-(5-phospho-D-ribosyl)imidazole-4-carboxamide + (6S)-5,6,7,8-tetrahydrofolate. It catalyses the reaction IMP + H2O = 5-formamido-1-(5-phospho-D-ribosyl)imidazole-4-carboxamide. Its pathway is purine metabolism; IMP biosynthesis via de novo pathway; 5-formamido-1-(5-phospho-D-ribosyl)imidazole-4-carboxamide from 5-amino-1-(5-phospho-D-ribosyl)imidazole-4-carboxamide (10-formyl THF route): step 1/1. The protein operates within purine metabolism; IMP biosynthesis via de novo pathway; IMP from 5-formamido-1-(5-phospho-D-ribosyl)imidazole-4-carboxamide: step 1/1. In Prochlorococcus marinus (strain MIT 9211), this protein is Bifunctional purine biosynthesis protein PurH.